The following is a 310-amino-acid chain: Methionyl-tRNA formyltransferase (310 aa).

S109–P112 contacts (6S)-5,6,7,8-tetrahydrofolate.

This sequence belongs to the Fmt family.

The enzyme catalyses L-methionyl-tRNA(fMet) + (6R)-10-formyltetrahydrofolate = N-formyl-L-methionyl-tRNA(fMet) + (6S)-5,6,7,8-tetrahydrofolate + H(+). Its function is as follows. Attaches a formyl group to the free amino group of methionyl-tRNA(fMet). The formyl group appears to play a dual role in the initiator identity of N-formylmethionyl-tRNA by promoting its recognition by IF2 and preventing the misappropriation of this tRNA by the elongation apparatus. The polypeptide is Methionyl-tRNA formyltransferase (Agathobacter rectalis (strain ATCC 33656 / DSM 3377 / JCM 17463 / KCTC 5835 / VPI 0990) (Eubacterium rectale)).